We begin with the raw amino-acid sequence, 91 residues long: Small integral membrane protein 12-B (91 aa).

A helical transmembrane segment spans residues 12-34; that stretch reads YAPYITFPVAFVVGAVGYQLEWF.

Belongs to the SMIM12 family.

It localises to the membrane. In Xenopus laevis (African clawed frog), this protein is Small integral membrane protein 12-B (smim12-b).